Here is a 546-residue protein sequence, read N- to C-terminus: Chaperonin GroEL 2 (546 aa).

Residues 30–33, K51, 87–91, G415, and D495 each bind ATP; these read TLGP and DGTTT. Residues 527–546 form a disordered region; that stretch reads DAAPATAPGGPGAGGPGFDF. The segment covering 535–546 has biased composition (gly residues); that stretch reads GGPGAGGPGFDF.

The protein belongs to the chaperonin (HSP60) family. In terms of assembly, forms a cylinder of 14 subunits composed of two heptameric rings stacked back-to-back. Interacts with the co-chaperonin GroES.

The protein resides in the cytoplasm. It catalyses the reaction ATP + H2O + a folded polypeptide = ADP + phosphate + an unfolded polypeptide.. Its function is as follows. Together with its co-chaperonin GroES, plays an essential role in assisting protein folding. The GroEL-GroES system forms a nano-cage that allows encapsulation of the non-native substrate proteins and provides a physical environment optimized to promote and accelerate protein folding. In Burkholderia ambifaria (strain ATCC BAA-244 / DSM 16087 / CCUG 44356 / LMG 19182 / AMMD) (Burkholderia cepacia (strain AMMD)), this protein is Chaperonin GroEL 2.